Reading from the N-terminus, the 339-residue chain is Phosphatidylglycerol--prolipoprotein diacylglyceryl transferase (339 aa).

The next 3 helical transmembrane spans lie at 43–63 (FTIA…YWLG), 81–101 (ILWM…LTSW), and 121–141 (NGGI…IYFA). Arg167 provides a ligand contact to a 1,2-diacyl-sn-glycero-3-phospho-(1'-sn-glycerol). The next 2 membrane-spanning stretches (helical) occupy residues 231-251 (FTQL…YFWL) and 300-320 (LWTD…WMLW).

The protein belongs to the Lgt family.

The protein localises to the cell membrane. The enzyme catalyses L-cysteinyl-[prolipoprotein] + a 1,2-diacyl-sn-glycero-3-phospho-(1'-sn-glycerol) = an S-1,2-diacyl-sn-glyceryl-L-cysteinyl-[prolipoprotein] + sn-glycerol 1-phosphate + H(+). It functions in the pathway protein modification; lipoprotein biosynthesis (diacylglyceryl transfer). Its function is as follows. Catalyzes the transfer of the diacylglyceryl group from phosphatidylglycerol to the sulfhydryl group of the N-terminal cysteine of a prolipoprotein, the first step in the formation of mature lipoproteins. This chain is Phosphatidylglycerol--prolipoprotein diacylglyceryl transferase, found in Deinococcus radiodurans (strain ATCC 13939 / DSM 20539 / JCM 16871 / CCUG 27074 / LMG 4051 / NBRC 15346 / NCIMB 9279 / VKM B-1422 / R1).